Here is a 278-residue protein sequence, read N- to C-terminus: tRNA pseudouridine synthase A (278 aa).

The Nucleophile role is filled by Asp-52. Tyr-110 contacts substrate. The tract at residues 259–278 is disordered; that stretch reads SKRQNGTTKVEQPSSYVHEE. A compositionally biased stretch (polar residues) spans 261-278; that stretch reads RQNGTTKVEQPSSYVHEE.

The protein belongs to the tRNA pseudouridine synthase TruA family. Homodimer.

It catalyses the reaction uridine(38/39/40) in tRNA = pseudouridine(38/39/40) in tRNA. Functionally, formation of pseudouridine at positions 38, 39 and 40 in the anticodon stem and loop of transfer RNAs. In Chloroflexus aurantiacus (strain ATCC 29366 / DSM 635 / J-10-fl), this protein is tRNA pseudouridine synthase A.